The sequence spans 95 residues: MSNARDIIKRPVITERSTELMEDKKYTFEVDVRANKTQIKDAIEEIFEVKVTNVNTVNYKGKAKRFGRYTGFTPKRKKAIVQLSADSKELDFFEV.

It belongs to the universal ribosomal protein uL23 family. Part of the 50S ribosomal subunit. Contacts protein L29, and trigger factor when it is bound to the ribosome.

Functionally, one of the early assembly proteins it binds 23S rRNA. One of the proteins that surrounds the polypeptide exit tunnel on the outside of the ribosome. Forms the main docking site for trigger factor binding to the ribosome. The polypeptide is Large ribosomal subunit protein uL23 (Shouchella clausii (strain KSM-K16) (Alkalihalobacillus clausii)).